The primary structure comprises 146 residues: Snaclec mamushigin subunit beta (146 aa).

The first 23 residues, Met-1–Ala-23, serve as a signal peptide directing secretion. Disulfide bonds link Cys-25–Cys-36, Cys-53–Cys-142, and Cys-119–Cys-134. In terms of domain architecture, C-type lectin spans Tyr-32–Lys-143.

In terms of assembly, heterodimer of subunits alpha and beta; disulfide-linked. Expressed by the venom gland.

The protein localises to the secreted. In terms of biological role, binds to platelet GPIbalpha (GP1BA) and enhances platelet aggregation at low-shear stress. At high-shear stress, blocks platelet aggregation in a dose-dependent manner. The chain is Snaclec mamushigin subunit beta from Gloydius blomhoffii (Mamushi).